Here is a 703-residue protein sequence, read N- to C-terminus: Polyribonucleotide nucleotidyltransferase (703 aa).

Mg(2+) is bound by residues D488 and D494. The 60-residue stretch at 555–614 folds into the KH domain; the sequence is PKIVKMQINPDKIKDVIGPGGKIITKIIDETGVKIDIEQTGEVFISGIEIDMIKKAQELI. In terms of domain architecture, S1 motif spans 624–692; the sequence is GKTYKGKVSR…EKGRVNLSRK (69 aa).

Belongs to the polyribonucleotide nucleotidyltransferase family. Requires Mg(2+) as cofactor.

The protein localises to the cytoplasm. The enzyme catalyses RNA(n+1) + phosphate = RNA(n) + a ribonucleoside 5'-diphosphate. Involved in mRNA degradation. Catalyzes the phosphorolysis of single-stranded polyribonucleotides processively in the 3'- to 5'-direction. This chain is Polyribonucleotide nucleotidyltransferase, found in Clostridioides difficile (strain 630) (Peptoclostridium difficile).